The chain runs to 152 residues: Interleukin-3 (152 aa).

The signal sequence occupies residues 1–19 (MSRLPVLLLLQLLVRPGLQ). Residues Asn-34 and Asn-89 are each glycosylated (N-linked (GlcNAc...) asparagine). Cys-35 and Cys-103 are joined by a disulfide.

It belongs to the IL-3 family. Interacts with IL3RA. In terms of tissue distribution, activated T-cells, mast cells, natural killer cells.

It localises to the secreted. Cytokine secreted predominantly by activated T-lymphocytes as well as mast cells and osteoblastic cells that controls the production and differentiation of hematopoietic progenitor cells into lineage-restricted cells. Also stimulates mature basophils, eosinophils, and monocytes to become functionally activated. In addition, plays an important role in neural cell proliferation and survival. Participates as well in bone homeostasis and inhibits osteoclast differentiation by preventing NF-kappa-B nuclear translocation and activation. Mechanistically, exerts its biological effects through a receptor composed of IL3RA subunit and a signal transducing subunit IL3RB. Receptor stimulation results in the rapid activation of JAK2 kinase activity leading to STAT5-mediated transcriptional program. Alternatively, contributes to cell survival under oxidative stress in non-hematopoietic systems by activating pathways mediated by PI3K/AKT and ERK. The polypeptide is Interleukin-3 (Homo sapiens (Human)).